The chain runs to 148 residues: Lysozyme C-1 (148 aa).

A signal peptide spans 1–18; the sequence is MKALLVLGFLLLSASVQA. Positions 19–148 constitute a C-type lysozyme domain; the sequence is KIYERCQFAR…LSGYIRNCGV (130 aa). Cystine bridges form between Cys-24–Cys-146, Cys-48–Cys-134, Cys-83–Cys-99, and Cys-95–Cys-113. Residues Glu-53 and Asp-71 contribute to the active site.

This sequence belongs to the glycosyl hydrolase 22 family. As to quaternary structure, monomer. In terms of tissue distribution, expressed in lung, small intestine and spleen.

Its subcellular location is the secreted. It catalyses the reaction Hydrolysis of (1-&gt;4)-beta-linkages between N-acetylmuramic acid and N-acetyl-D-glucosamine residues in a peptidoglycan and between N-acetyl-D-glucosamine residues in chitodextrins.. Its function is as follows. Lysozymes have primarily a bacteriolytic function; those in tissues and body fluids are associated with the monocyte-macrophage system and enhance the activity of immunoagents. In the intestine they may also have a digestive function. The protein is Lysozyme C-1 (Lyz1) of Rattus norvegicus (Rat).